The sequence spans 879 residues: Alanine--tRNA ligase (879 aa).

Zn(2+) is bound by residues histidine 565, histidine 569, cysteine 674, and histidine 678.

This sequence belongs to the class-II aminoacyl-tRNA synthetase family. Zn(2+) serves as cofactor.

The protein localises to the cytoplasm. The catalysed reaction is tRNA(Ala) + L-alanine + ATP = L-alanyl-tRNA(Ala) + AMP + diphosphate. Catalyzes the attachment of alanine to tRNA(Ala) in a two-step reaction: alanine is first activated by ATP to form Ala-AMP and then transferred to the acceptor end of tRNA(Ala). Also edits incorrectly charged Ser-tRNA(Ala) and Gly-tRNA(Ala) via its editing domain. This is Alanine--tRNA ligase from Gluconobacter oxydans (strain 621H) (Gluconobacter suboxydans).